We begin with the raw amino-acid sequence, 597 residues long: MSLPIRNVAIIAHVDHGKTTLVDALLKQSGIFREGEDVPVCVMDSNDLERERGITILSKNTAVRYQDTLINIVDTPGHADFGGEVERVLGMVDGCVLIVDANEGPMPQTRFVLKKALEKGLRPLVVVNKIDRPRADPNTAVDKVFDLFVELGADDDQCDFTTLFASGLGGFAKESLDDDSEDMKPLFEAILHHVPPPAGDPNKPLQLQVTTLDYSDYLGRIIIGRIHNGTVKAGQQAALVKEDGSIAKGKVSKLLGFEGLNRIELPEASAGYIVAIAGFADANIGETLTCPDEPQALPLIKVDEPTLQMTFSVNDSPFAGQEGKFVTSRQIRDRLNRELETNVALRVEDGESAEQFLVSGRGELHLGILIETMRREGYEFQVAQPQVIYREVNGQPCEPVEYLVLDVPEAAVGACIERLGQRRGEMQDMQTSVNGRTQLEFVIPARGLLGFRGDFIRITRGEGIMNHSFLEYRPMSGDLETRYNGVMVAFEEGVATFYAMKNAEDRGVFFITPGTKVYKGMIIGEHNRPQDIELNVCKTKQLTNHRSATGDELVQLQAPEDMNLERALEYIGPDELVEITPESIRLRKVARKKLVKR.

In terms of domain architecture, tr-type G spans 3–198; the sequence is LPIRNVAIIA…AILHHVPPPA (196 aa). Residues 15 to 20 and 128 to 131 each bind GTP; these read DHGKTT and NKID.

This sequence belongs to the TRAFAC class translation factor GTPase superfamily. Classic translation factor GTPase family. BipA subfamily. As to quaternary structure, monomer.

The protein localises to the cytoplasm. The enzyme catalyses GTP + H2O = GDP + phosphate + H(+). A 50S ribosomal subunit assembly protein with GTPase activity, required for 50S subunit assembly at low temperatures, may also play a role in translation. Binds GTP and analogs. Binds the 70S ribosome between the 30S and 50S subunits, in a similar position as ribosome-bound EF-G; it contacts a number of ribosomal proteins, both rRNAs and the A-site tRNA. The sequence is that of Large ribosomal subunit assembly factor BipA from Synechocystis sp. (strain ATCC 27184 / PCC 6803 / Kazusa).